We begin with the raw amino-acid sequence, 208 residues long: Uridine kinase (208 aa).

11-18 serves as a coordination point for ATP; it reads GGTGSGKS.

This sequence belongs to the uridine kinase family.

The protein resides in the cytoplasm. It carries out the reaction uridine + ATP = UMP + ADP + H(+). The enzyme catalyses cytidine + ATP = CMP + ADP + H(+). The protein operates within pyrimidine metabolism; CTP biosynthesis via salvage pathway; CTP from cytidine: step 1/3. It functions in the pathway pyrimidine metabolism; UMP biosynthesis via salvage pathway; UMP from uridine: step 1/1. The sequence is that of Uridine kinase from Clostridium perfringens (strain SM101 / Type A).